We begin with the raw amino-acid sequence, 216 residues long: Probable chemoreceptor glutamine deamidase CheD (216 aa).

Belongs to the CheD family.

It carries out the reaction L-glutaminyl-[protein] + H2O = L-glutamyl-[protein] + NH4(+). Functionally, probably deamidates glutamine residues to glutamate on methyl-accepting chemotaxis receptors (MCPs), playing an important role in chemotaxis. This Halorhodospira halophila (strain DSM 244 / SL1) (Ectothiorhodospira halophila (strain DSM 244 / SL1)) protein is Probable chemoreceptor glutamine deamidase CheD.